The following is an 86-amino-acid chain: BaSO(4)-adsorbing protein 1 (86 aa).

Cystine bridges form between cysteine 6/cysteine 22, cysteine 18/cysteine 49, and cysteine 39/cysteine 54. A disordered region spans residues 58-86 (GDSASNTQNQGGSRRQENEDQGDDEWDRK). Residues 59–70 (DSASNTQNQGGS) show a composition bias toward polar residues. A compositionally biased stretch (acidic residues) spans 76 to 86 (EDQGDDEWDRK).

As to expression, salivary gland (at protein level).

The protein localises to the secreted. Inhibits lectin and classical pathways of complement system activation in the host with no significant effect on the alternative pathway. Inhibits host extrinsic blood coagulation pathway but not the intrinsic cascade. Binds to neutral and negatively charged membranes in vitro; binding is reduced upon pre-incubation with Ca(2+). The sequence is that of BaSO(4)-adsorbing protein 1 from Ornithodoros savignyi (African eyed tampan).